A 396-amino-acid polypeptide reads, in one-letter code: Flavohemoprotein (396 aa).

A Globin domain is found at 1 to 136 (MLDNHTIAIV…LANVFIQRED (136 aa)). Histidine 85 is a binding site for heme b. Catalysis depends on charge relay system residues tyrosine 95 and glutamate 135. The interval 147-396 (GGWSGVRPFR…YECFGPHKVV (250 aa)) is reductase. Positions 150–255 (SGVRPFRIVN…AAPHGDFFLD (106 aa)) constitute an FAD-binding FR-type domain. FAD-binding positions include tyrosine 188 and 204–207 (RQYS). 268 to 273 (GVGQTP) provides a ligand contact to NADP(+). 389 to 392 (CFGP) lines the FAD pocket.

It belongs to the globin family. Two-domain flavohemoproteins subfamily. The protein in the C-terminal section; belongs to the flavoprotein pyridine nucleotide cytochrome reductase family. Requires heme b as cofactor. FAD is required as a cofactor.

It carries out the reaction 2 nitric oxide + NADPH + 2 O2 = 2 nitrate + NADP(+) + H(+). The catalysed reaction is 2 nitric oxide + NADH + 2 O2 = 2 nitrate + NAD(+) + H(+). In terms of biological role, is involved in NO detoxification in an aerobic process, termed nitric oxide dioxygenase (NOD) reaction that utilizes O(2) and NAD(P)H to convert NO to nitrate, which protects the bacterium from various noxious nitrogen compounds. Therefore, plays a central role in the inducible response to nitrosative stress. The polypeptide is Flavohemoprotein (Pectobacterium atrosepticum (strain SCRI 1043 / ATCC BAA-672) (Erwinia carotovora subsp. atroseptica)).